We begin with the raw amino-acid sequence, 114 residues long: Type 4 adapter protein IcmS (114 aa).

In terms of assembly, the T4BSS is a complex nanomachine composed of several subcomplexes. This subunit is part of the Type IV Coupling Complex (T4CC), a subcomplex composed of the DotLMNYZ core and the IcmSW-LvgA adapter subunits, linked by the C-terminal tail of DotL. Interacts with IcmW. IcmS and IcmW form a stable complex. Interacts directly with the type 4 coupling protein DotL. Interacts with LvgA. Interacts with effector proteins.

It is found in the cytoplasm. Interaction with DotL is critical for the export of IcmSW-dependent substrates. Its function is as follows. Component of the Dot/Icm type IVB secretion system (T4BSS), which is used to inject bacterial effector proteins into eukaryotic host cells. Part of a subcomplex which recruits effector proteins and delivers them to the core transmembrane subcomplex. The IcmS/IcmW protein complex plays an important role in protein translocation by interacting with multiple Dot/Icm effector proteins to facilitate their translocation into host cells. Interaction promotes conformational changes in the effector protein, which may facilitate display of a C-terminal translocation signal. May maintain the substrates in a translocation competent form. Required for intracellular growth in host cells, replicative phagosome formation and phagosome trafficking. IcmS is required for IcmW stability. The protein is Type 4 adapter protein IcmS of Legionella pneumophila subsp. pneumophila (strain Philadelphia 1 / ATCC 33152 / DSM 7513).